The sequence spans 755 residues: MTVSILLDSLKDDGQRLSECRHESPFSILGPQPFKDKWIIRIWMPEASQVELVTQQTKIKLQNPNHEWIFEGVLEKDPGTDYQIKVNRGGIEHVQHDPWSFRKEWMGEIDRHLFAEGNHHHIWRKMGAHLTEIDKKKGVMFCLWAPHAKSVSVIGDLNSWDGRHHPMQKRLGGIWELFIPGLSEGDLYKYEIRTEKGHCYEKADPYGFQHEVRPAKSSVISKIDSFQWSDQSWISNRDNRDPLEQPISVYEMHLGSWMHASSDDPFINSNGEHRAPVPAADMKPGSRLLTYKELANKVIPYVKERGFTHIELMPISEHPFDGSWGYQVTGWYAPTSRFGSPDEFRAFVDSCHKEGIGIILDWVPGHFPKDQHGLAYFDGSHLYEHSDPRVGEHKEWGTLIFNYSRNEVRNFLVANLIFWFDQFHIDGIRVDAVASMLYKDYLRPEGEWIPNEDGGNENFEAVRFLQQANHVLFQHFPGALSIAEESTTWTGVTKPTDMDGLGFNLKWNMGWMHDMLDYFEIDPWFRQFNQNNITFSICYNFTENFMLALSHDEVVHGKSHLLHKMPGDDWQKYANTRALLAYMWTHPGKKTIFMGMEFGQRQEWNVWDDLQWDLLNYEPHKGIQKLVDDLNNLYKREPALWRNDFDEYGFQWIDCDDNKNSVISFMRREKTDGEWLVIVANFTPQNHSNYRIGVPVDGFYEEIFNTDASQYGGSNLGNMGGKSTDLYNIHGYENSIDLCLPPLSVLVLKHKSKKN.

The active-site Nucleophile is D431. E484 serves as the catalytic Proton donor.

This sequence belongs to the glycosyl hydrolase 13 family. GlgB subfamily. Monomer.

It catalyses the reaction Transfers a segment of a (1-&gt;4)-alpha-D-glucan chain to a primary hydroxy group in a similar glucan chain.. The protein operates within glycan biosynthesis; glycogen biosynthesis. Its function is as follows. Catalyzes the formation of the alpha-1,6-glucosidic linkages in glycogen by scission of a 1,4-alpha-linked oligosaccharide from growing alpha-1,4-glucan chains and the subsequent attachment of the oligosaccharide to the alpha-1,6 position. The polypeptide is 1,4-alpha-glucan branching enzyme GlgB (Prochlorococcus marinus (strain NATL2A)).